A 499-amino-acid polypeptide reads, in one-letter code: Diacylglycerol kinase 1 (499 aa).

The region spanning 41-194 (APCCPVVVFI…IDSWHIIMRM (154 aa)) is the DAGKc domain. The segment at 442 to 479 (PCKSKSVNDPSSPMCCSNHDDDERNSLEDEDEWEEGRK) is disordered. Over residues 446-456 (KSVNDPSSPMC) the composition is skewed to polar residues. The segment covering 459–468 (NHDDDERNSL) has biased composition (basic and acidic residues).

Belongs to the eukaryotic diacylglycerol kinase family. In terms of assembly, monomer. As to expression, highly expressed in roots.

The catalysed reaction is a 1,2-diacyl-sn-glycerol + ATP = a 1,2-diacyl-sn-glycero-3-phosphate + ADP + H(+). Phosphorylates the second messenger diacylglycerol (DAG) to generate phosphatidic acid (PA), another important signaling molecule. PA is required for plant development and responses to abiotic stress. May play a role in disease resistance responses to pathogen attack. Modulates root architecture by regulating the ratio of DAG and PA, which have opposite effect on the promotion or suppression of lateral roots vs seminal roots. Suppresses lateral root number, but promotes seminal root and crown root thickness. The sequence is that of Diacylglycerol kinase 1 from Oryza sativa subsp. japonica (Rice).